We begin with the raw amino-acid sequence, 491 residues long: MTTWDKCLKKIKKNLSTFEYKTWIKPIHVEQNSNLFTVYCNNEYFKKHIKSKYGNLILSTIQECHGNDLIIEYSNKKFSGEKITEVITAGPQANFFSTTSVEIKDESEDTKVVQEPKISKKSNSKDFSSSQELFGFDEAMLITAKEDEEYSFGLPLKEKYVFDSFVVGDANKIARAAAMQVSINPGKLHNPLFIYGGSGLGKTHLMQAIGNHAREVNPNAKIIYTNSEQFIKDYVNSIRLQDQDEFQRVYRSADILLIDDIQFIAGKEGTAQEFFHTFNALYENGKQIILTSDKYPNEIEGLEERLVSRFGYGLTVSVDMPDLETRIAILLKKAHDLGQKLPNETAAFIAENVRTNVRELEGALNRVLTTSKFNHKDPTIEVAQACLRDVIKIQEKKVKIDNIQKVVADFYRIRVKDLTSNQRSRNIARPRQIAMSLARELTSHSLPEIGNAFGGRDHTTVMHAVKAITKLRQSNTSISDDYELLLNKISR.

A domain I, interacts with DnaA modulators region spans residues 1–69; the sequence is MTTWDKCLKK…TIQECHGNDL (69 aa). A domain II region spans residues 69-154; the sequence is LIIEYSNKKF…KEDEEYSFGL (86 aa). Residues 155–371 form a domain III, AAA+ region region; it reads PLKEKYVFDS…GALNRVLTTS (217 aa). ATP-binding residues include Gly199, Gly201, Lys202, and Thr203. Residues 372–491 form a domain IV, binds dsDNA region; the sequence is KFNHKDPTIE…YELLLNKISR (120 aa).

The protein belongs to the DnaA family. As to quaternary structure, oligomerizes as a right-handed, spiral filament on DNA at oriC.

It localises to the cytoplasm. Its function is as follows. Plays an essential role in the initiation and regulation of chromosomal replication. ATP-DnaA binds to the origin of replication (oriC) to initiate formation of the DNA replication initiation complex once per cell cycle. Binds the DnaA box (a 9 base pair repeat at the origin) and separates the double-stranded (ds)DNA. Forms a right-handed helical filament on oriC DNA; dsDNA binds to the exterior of the filament while single-stranded (ss)DNA is stabiized in the filament's interior. The ATP-DnaA-oriC complex binds and stabilizes one strand of the AT-rich DNA unwinding element (DUE), permitting loading of DNA polymerase. After initiation quickly degrades to an ADP-DnaA complex that is not apt for DNA replication. Binds acidic phospholipids. This chain is Chromosomal replication initiator protein DnaA, found in Francisella tularensis subsp. tularensis (strain WY96-3418).